The chain runs to 264 residues: Hydroxyethylthiazole kinase (264 aa).

M43 serves as a coordination point for substrate. ATP is bound by residues R119 and T165. G192 provides a ligand contact to substrate.

The protein belongs to the Thz kinase family. Mg(2+) is required as a cofactor.

The catalysed reaction is 5-(2-hydroxyethyl)-4-methylthiazole + ATP = 4-methyl-5-(2-phosphooxyethyl)-thiazole + ADP + H(+). The protein operates within cofactor biosynthesis; thiamine diphosphate biosynthesis; 4-methyl-5-(2-phosphoethyl)-thiazole from 5-(2-hydroxyethyl)-4-methylthiazole: step 1/1. Catalyzes the phosphorylation of the hydroxyl group of 4-methyl-5-beta-hydroxyethylthiazole (THZ). The polypeptide is Hydroxyethylthiazole kinase (Anoxybacillus flavithermus (strain DSM 21510 / WK1)).